The primary structure comprises 548 residues: Tryprostatin B 6-hydroxylase (548 aa).

3 consecutive transmembrane segments (helical) span residues M5–F25, W35–A54, and L73–F93. C491 is a binding site for heme.

It belongs to the cytochrome P450 family. Requires heme as cofactor.

The protein resides in the membrane. The enzyme catalyses tryprostatin B + reduced [NADPH--hemoprotein reductase] + O2 = 6-hydroxytryprostatin B + oxidized [NADPH--hemoprotein reductase] + H2O + H(+). Its pathway is mycotoxin biosynthesis. In terms of biological role, cytochrome P450 monooxygenase; part of the gene cluster that mediates the biosynthesis of fumitremorgins, indole alkaloids that carry not only intriguing chemical structures, but also interesting biological and pharmacological activities. The biosynthesis of fumitremorgin-type alkaloids begins by condensation of the two amino acids L-tryptophan and L-proline to brevianamide F, catalyzed by the non-ribosomal peptide synthetase ftmPS/ftmA. Brevianamide F is then prenylated by the prenyltransferase ftmPT1/ftmB in the presence of dimethylallyl diphosphate, resulting in the formation of tryprostatin B. The three cytochrome P450 monooxygenases, ftmP450-1/ftmC, ftmP450-2/ftmE and ftmP450-3/FtmG, are responsible for the conversion of tryprostatin B to 6-hydroxytryprostatin B, tryprostatin A to fumitremorgin C and fumitremorgin C to 12,13-dihydroxyfumitremorgin C, respectively. The putative methyltransferase ftmMT/ftmD is expected for the conversion of 6-hydroxytryprostatin B to tryprostatin A. FtmPT2/FtmH catalyzes the prenylation of 12,13-dihydroxyfumitre-morgin C in the presence of dimethylallyl diphosphate, resulting in the formation of fumitremorgin B. Fumitremorgin B is further converted to verruculogen by ftmOx1/ftmF via the insertion of an endoperoxide bond between the two prenyl moieties. Finally, verruculogen is further converted to fumitremorgin A by the verruculogen prenyltransferase ftmPT3. The protein is Tryprostatin B 6-hydroxylase of Neosartorya fischeri (strain ATCC 1020 / DSM 3700 / CBS 544.65 / FGSC A1164 / JCM 1740 / NRRL 181 / WB 181) (Aspergillus fischerianus).